The chain runs to 297 residues: Golgi-associated RAB2 interactor protein 1A (297 aa).

Residues 226-257 (SNRHQTSRDRHTDTATETDNSGNCKSTPLVAS) are disordered. Polar residues predominate over residues 240–257 (ATETDNSGNCKSTPLVAS).

It belongs to the GARIN family. In terms of assembly, interacts (via N-terminus) with RAB2B (in GTP-bound form). As to expression, expressed in testis (at protein level).

It localises to the golgi apparatus. RAB2B effector protein required for accurate acrosome formation and normal male fertility. This is Golgi-associated RAB2 interactor protein 1A from Mus musculus (Mouse).